We begin with the raw amino-acid sequence, 410 residues long: 2,3-bisphosphoglycerate-independent phosphoglycerate mutase (410 aa).

The protein belongs to the BPG-independent phosphoglycerate mutase family. A-PGAM subfamily.

The enzyme catalyses (2R)-2-phosphoglycerate = (2R)-3-phosphoglycerate. The protein operates within carbohydrate degradation; glycolysis; pyruvate from D-glyceraldehyde 3-phosphate: step 3/5. In terms of biological role, catalyzes the interconversion of 2-phosphoglycerate and 3-phosphoglycerate. In Pyrococcus abyssi (strain GE5 / Orsay), this protein is 2,3-bisphosphoglycerate-independent phosphoglycerate mutase.